The chain runs to 398 residues: Enoyl-[acyl-carrier-protein] reductase [NADH] (398 aa).

NAD(+) is bound by residues 48-53 (GSSTGY), 74-75 (FE), 111-112 (DA), and 139-140 (LA). Residue Y225 coordinates substrate. Residue Y235 is the Proton donor of the active site. Residues K244 and 273-275 (VVT) each bind NAD(+).

The protein belongs to the TER reductase family. Monomer.

The enzyme catalyses a 2,3-saturated acyl-[ACP] + NAD(+) = a (2E)-enoyl-[ACP] + NADH + H(+). The protein operates within lipid metabolism; fatty acid biosynthesis. In terms of biological role, involved in the final reduction of the elongation cycle of fatty acid synthesis (FAS II). Catalyzes the reduction of a carbon-carbon double bond in an enoyl moiety that is covalently linked to an acyl carrier protein (ACP). This chain is Enoyl-[acyl-carrier-protein] reductase [NADH], found in Pseudomonas paraeruginosa (strain DSM 24068 / PA7) (Pseudomonas aeruginosa (strain PA7)).